An 872-amino-acid chain; its full sequence is Alanine--tRNA ligase (872 aa).

Zn(2+)-binding residues include His-567, His-571, Cys-669, and His-673.

The protein belongs to the class-II aminoacyl-tRNA synthetase family. Requires Zn(2+) as cofactor.

It is found in the cytoplasm. It carries out the reaction tRNA(Ala) + L-alanine + ATP = L-alanyl-tRNA(Ala) + AMP + diphosphate. Catalyzes the attachment of alanine to tRNA(Ala) in a two-step reaction: alanine is first activated by ATP to form Ala-AMP and then transferred to the acceptor end of tRNA(Ala). Also edits incorrectly charged Ser-tRNA(Ala) and Gly-tRNA(Ala) via its editing domain. In Streptococcus agalactiae serotype V (strain ATCC BAA-611 / 2603 V/R), this protein is Alanine--tRNA ligase.